The chain runs to 158 residues: Tryptophan-rich sensory protein (158 aa).

5 consecutive transmembrane segments (helical) span residues 5 to 25 (WALFLTFLAACGAPATTGALL), 44 to 65 (WVFPLAWTSLYFLMSLAAMRVA), 73 to 93 (ALAFYAAQLAFNTLWTPVFFG), 97 to 119 (MATALAVVMVMWLFVAATMWAFF), and 124 to 144 (WAGVLFVPYLIWATAATGLNF).

This sequence belongs to the TspO/BZRP family. Homodimer.

The protein localises to the membrane. The protein resides in the cell inner membrane. In terms of biological role, may play a role in the transmembrane transport of tetrapyrroles and similar compounds, and thereby contribute to the regulation of tetrapyrrole biosynthesis. Binds tetrapyrroles and promotes the photooxidative degradation of protoporphyrin IX. Binds protoporphyrin IX, hemin, and coproporphyrin III, but does not bind delta-aminolevulinic acid. Can bind bilirubin, curcumin, gossypol, retinoic acid, cholesterol and the benzodiazepine receptor agonist PK-11195 (in vitro). Plays a role in the response to low oxygen levels and in the regulation of the biosynthesis of photosynthetic pigments. This is Tryptophan-rich sensory protein from Cereibacter sphaeroides (Rhodobacter sphaeroides).